The following is a 426-amino-acid chain: Serine hydroxymethyltransferase 1 (426 aa).

Residues Leu-118 and 122–124 each bind (6S)-5,6,7,8-tetrahydrofolate; that span reads GHL. Lys-227 carries the post-translational modification N6-(pyridoxal phosphate)lysine.

It belongs to the SHMT family. Homodimer. Requires pyridoxal 5'-phosphate as cofactor.

It is found in the cytoplasm. The catalysed reaction is (6R)-5,10-methylene-5,6,7,8-tetrahydrofolate + glycine + H2O = (6S)-5,6,7,8-tetrahydrofolate + L-serine. Its pathway is one-carbon metabolism; tetrahydrofolate interconversion. It functions in the pathway amino-acid biosynthesis; glycine biosynthesis; glycine from L-serine: step 1/1. Catalyzes the reversible interconversion of serine and glycine with tetrahydrofolate (THF) serving as the one-carbon carrier. This reaction serves as the major source of one-carbon groups required for the biosynthesis of purines, thymidylate, methionine, and other important biomolecules. Also exhibits THF-independent aldolase activity toward beta-hydroxyamino acids, producing glycine and aldehydes, via a retro-aldol mechanism. This Mycobacterium bovis (strain ATCC BAA-935 / AF2122/97) protein is Serine hydroxymethyltransferase 1.